Consider the following 509-residue polypeptide: Putative cytochrome P450 CYP13A8 (509 aa).

Position 455 (Cys-455) interacts with heme.

It belongs to the cytochrome P450 family. It depends on heme as a cofactor.

Cytochromes P450 are a group of heme-thiolate monooxygenases. They oxidize a variety of structurally unrelated compounds, including steroids, fatty acids, and xenobiotics. This chain is Putative cytochrome P450 CYP13A8 (cyp-13A8), found in Caenorhabditis elegans.